The sequence spans 1264 residues: Box A-binding factor (1264 aa).

The span at 1 to 11 (MTKTTKPKEKA) shows a compositional bias: basic and acidic residues. Disordered stretches follow at residues 1-25 (MTKT…SGLG), 161-200 (TASD…ESVK), 234-253 (LISH…QHQQ), 405-463 (QLHQ…HALS), 523-585 (NQTQ…SAAT), and 599-627 (HNSS…PAFQ). The segment covering 16 to 25 (AVIGSGSGLG) has biased composition (gly residues). The span at 161–171 (TASDTAATSEA) shows a compositional bias: low complexity. Residues 189–198 (SKAQNDASES) are compositionally biased toward polar residues. Basic residues predominate over residues 409 to 421 (QQHHHQQQLHHHQ). Low complexity-rich tracts occupy residues 422 to 438 (QQQQ…QQQQ), 447 to 459 (STSS…PSSS), and 523 to 554 (NQTQ…QQQQ). Over residues 555-564 (QHHHNQHQHH) the composition is skewed to basic residues. 2 stretches are compositionally biased toward low complexity: residues 565-585 (NSSS…SAAT) and 599-614 (HNSS…RSSH). The GATA-type zinc finger occupies 803 to 827 (CSNCHTTHTSLWRRNPAGEPVCNAC). 3 disordered regions span residues 841-867 (TMKK…SKSK), 899-1048 (DDMK…SNEN), and 1181-1202 (EEMD…QHGE). Composition is skewed to low complexity over residues 909-950 (PYNS…GSTS) and 985-1007 (QMSP…HSPS). Positions 1008–1023 (TPTSIFNTPSPTHQLH) are enriched in polar residues. Composition is skewed to low complexity over residues 1024–1048 (NNNN…SNEN) and 1185–1200 (QSQQ…QQQH). Serine 1208 and serine 1210 each carry phosphoserine.

As to quaternary structure, interacts (via GATA-type Zn-finger domain) with Bfc; this interaction enhances srp binding to the promoter of crq/croquemort.

It is found in the nucleus. May function as a transcriptional activator protein and may play a key role in the organogenesis of the fat body. Binds a sequence element (5'-[TA]GATAA-3') found in the larval promoters of all known alcohol dehydrogenase (ADH) genes. Acts as a homeotic gene downstream of the terminal gap gene HKB to promote morphogenesis and differentiation of anterior and posterior midgut. Together with transcriptional cofactor Bfc directly binds the promoter of phagocytic receptor crq/croquemort to upregulate its expression and stimulate efferocytosis in response to apoptotic cells, including during embryogenesis. This chain is Box A-binding factor (srp), found in Drosophila melanogaster (Fruit fly).